The sequence spans 727 residues: Bromodomain-containing protein C631.02 (727 aa).

Disordered stretches follow at residues 27 to 231 (AATI…PPMT) and 341 to 369 (TSYS…AAMY). The segment covering 56-68 (ENDDGTLDLFGDS) has biased composition (acidic residues). Basic and acidic residues predominate over residues 69-78 (ELEKEQKGDN). Residues 102 to 114 (PSSPTHPSVSNIT) show a composition bias toward polar residues. The segment covering 128 to 150 (EEEKSSESLDSHTHPPKRVRNED) has biased composition (basic and acidic residues). Positions 153-177 (LTFSKTSPVSPSSLKDGASNTVTND) are enriched in polar residues. At Ser-162 the chain carries Phosphoserine. Basic and acidic residues predominate over residues 206-231 (SKEHSSPHDETVKKEENDKDQYPPMT). One can recognise a Bromo 1 domain in the interval 229–335 (PMTKEQHKYI…ATFERQLKQL (107 aa)). The Bromo 2 domain maps to 388–497 (RKDAAEMKFC…SIFQKLWANK (110 aa)). The region spanning 570–650 (RSLSVDIYPP…KGDEIGAEAL (81 aa)) is the NET domain. Positions 699 to 727 (IAAYNTKSLGSDDSSSEDDGESSESSDSA) are disordered. Residues 712 to 727 (SSSEDDGESSESSDSA) show a composition bias toward acidic residues.

The protein belongs to the BET family.

It is found in the nucleus. The protein is Bromodomain-containing protein C631.02 of Schizosaccharomyces pombe (strain 972 / ATCC 24843) (Fission yeast).